Consider the following 220-residue polypeptide: Probable nicotinate-nucleotide adenylyltransferase (220 aa).

The protein belongs to the NadD family.

The enzyme catalyses nicotinate beta-D-ribonucleotide + ATP + H(+) = deamido-NAD(+) + diphosphate. Its pathway is cofactor biosynthesis; NAD(+) biosynthesis; deamido-NAD(+) from nicotinate D-ribonucleotide: step 1/1. In terms of biological role, catalyzes the reversible adenylation of nicotinate mononucleotide (NaMN) to nicotinic acid adenine dinucleotide (NaAD). The polypeptide is Probable nicotinate-nucleotide adenylyltransferase (Serratia proteamaculans (strain 568)).